The following is a 534-amino-acid chain: Replication factor C large subunit (534 aa).

45-52 (GPPGIGKT) lines the ATP pocket. The span at 444 to 463 (KNKKEIKVKTKKDTVEDSSK) shows a compositional bias: basic and acidic residues. The segment at 444-534 (KNKKEIKVKT…KSRQTTLFDF (91 aa)) is disordered. Residues 488–510 (SSNSTTKNKTESPKNSSKTSSKT) are compositionally biased toward low complexity. Residues 517–527 (TSKKNNKKKSR) show a composition bias toward basic residues.

It belongs to the activator 1 small subunits family. RfcL subfamily. In terms of assembly, heteromultimer composed of small subunits (RfcS) and large subunits (RfcL).

Part of the RFC clamp loader complex which loads the PCNA sliding clamp onto DNA. In Methanosphaera stadtmanae (strain ATCC 43021 / DSM 3091 / JCM 11832 / MCB-3), this protein is Replication factor C large subunit.